Reading from the N-terminus, the 37-residue chain is Potassium channel toxin alpha-KTx 3.13 (37 aa).

3 cysteine pairs are disulfide-bonded: C7–C27, C13–C32, and C17–C34. K37 is subject to Lysine amide.

Belongs to the short scorpion toxin superfamily. Potassium channel inhibitor family. Alpha-KTx 03 subfamily. Expressed by the venom gland.

It localises to the secreted. Its function is as follows. Blocks voltage-gated potassium channels Kv1.1/KCNA1 (IC(50)=203.15 pM), Kv1.2/KCNA2 (IC(50)=8.92 nM) from rat and human Kv1.3 KCNA3/KCNA3 (IC(50)=171 pM) potently. At 2 uM, also blocks Shaker IR and has a moderate effect on rat Kv1.6/KCNA6. The polypeptide is Potassium channel toxin alpha-KTx 3.13 (Mesobuthus eupeus (Lesser Asian scorpion)).